The chain runs to 378 residues: Pulmonary surfactant-associated protein D (378 aa).

The N-terminal stretch at 1–20 (MLLLPLSVLILLTQPPRSLG) is a signal peptide. 2 positions are modified to S-nitrosocysteine: C35 and C40. The interval 43 to 221 (MENGLPGRDG…ERGAKGESGL (179 aa)) is disordered. Residues 46 to 222 (GLPGRDGRDG…RGAKGESGLP (177 aa)) form the Collagen-like domain. A compositionally biased stretch (basic and acidic residues) spans 50–65 (RDGRDGREGPRGEKGD). P78 is subject to 4-hydroxyproline. The residue at position 87 (K87) is a 5-hydroxylysine. N90 is a glycosylation site (N-linked (GlcNAc...) asparagine). P96 bears the 4-hydroxyproline mark. 5-hydroxylysine is present on K99. A compositionally biased stretch (pro residues) spans 105–114 (CGPPGPPGIP). A compositionally biased stretch (low complexity) spans 137 to 146 (PKGETGPKGE). 4-hydroxyproline is present on residues P171 and P177. Over residues 173–197 (ERGAPGSAGAAGPAGATGPQGPSGA) the composition is skewed to low complexity. Over residues 204-216 (KGDRGPPGERGAK) the composition is skewed to basic and acidic residues. Residues 223–254 (GITALRQQVETLQGQVQRLQKAFSQYKKVELF) adopt a coiled-coil conformation. A C-type lectin domain is found at 260–378 (VGEKIFKTGG…GELRLVICEF (119 aa)). 2 disulfide bridges follow: C281-C376 and C354-C368. A glycan (N-linked (GlcNAc...) asparagine) is linked at N323.

Belongs to the SFTPD family. As to quaternary structure, oligomeric complex of 4 set of homotrimers. In terms of processing, hydroxylation on proline residues within the sequence motif, GXPG, is most likely to be 4-hydroxy as this fits the requirement for 4-hydroxylation in vertebrates. S-nitrosylation at Cys-35 and Cys-40 alters the quaternary structure which results in a pro-inflammatory chemoattractive signaling activity with macrophages.

The protein resides in the secreted. It localises to the extracellular space. It is found in the extracellular matrix. Its subcellular location is the surface film. In terms of biological role, contributes to the lung's defense against inhaled microorganisms, organic antigens and toxins. Interacts with compounds such as bacterial lipopolysaccharides, oligosaccharides and fatty acids and modulates leukocyte action in immune response. May participate in the extracellular reorganization or turnover of pulmonary surfactant. Binds strongly maltose residues and to a lesser extent other alpha-glucosyl moieties. The sequence is that of Pulmonary surfactant-associated protein D (SFTPD) from Sus scrofa (Pig).